A 1245-amino-acid polypeptide reads, in one-letter code: Prospore membrane adapter protein SPO71 (1245 aa).

The disordered stretch occupies residues 207–270 (LHEEDQENTN…DFNYNREPSE (64 aa)). Residues 227–247 (KRKDLGESKSISRKDYSHFDR) show a composition bias toward basic and acidic residues. Positions 385-399 (INILPPWPTELTEEE) match the PxP motif. A PH domain is found at 1030–1229 (LIQKGPLYQK…WVMSIYYELE (200 aa)). The disordered stretch occupies residues 1154 to 1192 (KKGNEKQYTQDYGRQDNNIDPPSAPEADLNNSNVPSNTD). Composition is skewed to polar residues over residues 1159-1173 (KQYT…NNID) and 1182-1191 (LNNSNVPSNT).

This sequence belongs to the SPO71 family. Interacts (via PxP motif) with VPS13 (via SHR-BD domain); during prospore membrane formation.

It is found in the prospore membrane. Its function is as follows. Recruits the lipid transfer protein VPS13 to the prospore membrane during sporulation, thereby aiding prospore membrane formation. The sequence is that of Prospore membrane adapter protein SPO71 (SPO71) from Saccharomyces cerevisiae (strain ATCC 204508 / S288c) (Baker's yeast).